Here is a 103-residue protein sequence, read N- to C-terminus: Large ribosomal subunit protein bL21 (103 aa).

It belongs to the bacterial ribosomal protein bL21 family. Part of the 50S ribosomal subunit. Contacts protein L20.

Functionally, this protein binds to 23S rRNA in the presence of protein L20. This is Large ribosomal subunit protein bL21 from Amoebophilus asiaticus (strain 5a2).